A 107-amino-acid polypeptide reads, in one-letter code: ATP synthase peripheral stalk subunit F6, mitochondrial (107 aa).

A mitochondrion-targeting transit peptide spans 1–31; sequence MILQRLFRFSVIRSAVSVYLRRNIGVTAVAF. N6-acetyllysine is present on residues Lys-40, Lys-45, and Lys-78. An N6-acetyllysine; alternate mark is found at Lys-93 and Lys-98. N6-succinyllysine; alternate is present on residues Lys-93 and Lys-98. At Lys-104 the chain carries N6-acetyllysine.

This sequence belongs to the eukaryotic ATPase subunit F6 family. In terms of assembly, component of the ATP synthase complex composed at least of ATP5F1A/subunit alpha, ATP5F1B/subunit beta, ATP5MC1/subunit c (homooctomer), MT-ATP6/subunit a, MT-ATP8/subunit 8, ATP5ME/subunit e, ATP5MF/subunit f, ATP5MG/subunit g, ATP5MK/subunit k, ATP5MJ/subunit j, ATP5F1C/subunit gamma, ATP5F1D/subunit delta, ATP5F1E/subunit epsilon, ATP5PF/subunit F6, ATP5PB/subunit b, ATP5PD/subunit d, ATP5PO/subunit OSCP. ATP synthase complex consists of a soluble F(1) head domain (subunits alpha(3) and beta(3)) - the catalytic core - and a membrane F(0) domain - the membrane proton channel (subunits c, a, 8, e, f, g, k and j). These two domains are linked by a central stalk (subunits gamma, delta, and epsilon) rotating inside the F1 region and a stationary peripheral stalk (subunits F6, b, d, and OSCP).

Its subcellular location is the mitochondrion. The protein resides in the mitochondrion inner membrane. Its function is as follows. Subunit F6, of the mitochondrial membrane ATP synthase complex (F(1)F(0) ATP synthase or Complex V) that produces ATP from ADP in the presence of a proton gradient across the membrane which is generated by electron transport complexes of the respiratory chain. ATP synthase complex consist of a soluble F(1) head domain - the catalytic core - and a membrane F(1) domain - the membrane proton channel. These two domains are linked by a central stalk rotating inside the F(1) region and a stationary peripheral stalk. During catalysis, ATP synthesis in the catalytic domain of F(1) is coupled via a rotary mechanism of the central stalk subunits to proton translocation. In vivo, can only synthesize ATP although its ATP hydrolase activity can be activated artificially in vitro. Part of the complex F(0) domain. Part of the complex F(0) domain and the peripheric stalk, which acts as a stator to hold the catalytic alpha(3)beta(3) subcomplex and subunit a/ATP6 static relative to the rotary elements. This chain is ATP synthase peripheral stalk subunit F6, mitochondrial, found in Pongo abelii (Sumatran orangutan).